The following is a 107-amino-acid chain: MPSTCLVTVETQDPQVIPCTLSSPSFVLMAVISESLSISQSNPQSSIISLIESAVTSLSYVTWHSLVTKLISHFVTPFKARNCVLIVLVQALHVIPCTASITSLISF.

3 helical membrane-spanning segments follow: residues 16-36 (VIPC…SESL), 47-67 (IISL…HSLV), and 85-105 (LIVL…TSLI).

The protein localises to the membrane. This is an uncharacterized protein from Saccharomyces cerevisiae (strain ATCC 204508 / S288c) (Baker's yeast).